The sequence spans 338 residues: Heat-inducible transcription repressor HrcA (338 aa).

It belongs to the HrcA family.

Its function is as follows. Negative regulator of class I heat shock genes (grpE-dnaK-dnaJ and groELS operons). Prevents heat-shock induction of these operons. This chain is Heat-inducible transcription repressor HrcA, found in Nitrosomonas eutropha (strain DSM 101675 / C91 / Nm57).